The sequence spans 1036 residues: Isoleucine--tRNA ligase (1036 aa).

The short motif at 46-56 (PFATGLPHYGH) is the 'HIGH' region element. The 'KMSKS' region motif lies at 589–593 (KMSKR). Lys-592 is a binding site for ATP.

This sequence belongs to the class-I aminoacyl-tRNA synthetase family. IleS type 2 subfamily. As to quaternary structure, monomer. Zn(2+) is required as a cofactor.

Its subcellular location is the cytoplasm. It catalyses the reaction tRNA(Ile) + L-isoleucine + ATP = L-isoleucyl-tRNA(Ile) + AMP + diphosphate. In terms of biological role, catalyzes the attachment of isoleucine to tRNA(Ile). As IleRS can inadvertently accommodate and process structurally similar amino acids such as valine, to avoid such errors it has two additional distinct tRNA(Ile)-dependent editing activities. One activity is designated as 'pretransfer' editing and involves the hydrolysis of activated Val-AMP. The other activity is designated 'posttransfer' editing and involves deacylation of mischarged Val-tRNA(Ile). In Chlamydia trachomatis serovar D (strain ATCC VR-885 / DSM 19411 / UW-3/Cx), this protein is Isoleucine--tRNA ligase.